The following is a 501-amino-acid chain: ATP synthase subunit alpha (501 aa).

Residue 169 to 176 participates in ATP binding; it reads GDRQTGKT.

It belongs to the ATPase alpha/beta chains family. As to quaternary structure, F-type ATPases have 2 components, CF(1) - the catalytic core - and CF(0) - the membrane proton channel. CF(1) has five subunits: alpha(3), beta(3), gamma(1), delta(1), epsilon(1). CF(0) has three main subunits: a(1), b(2) and c(9-12). The alpha and beta chains form an alternating ring which encloses part of the gamma chain. CF(1) is attached to CF(0) by a central stalk formed by the gamma and epsilon chains, while a peripheral stalk is formed by the delta and b chains.

It localises to the cell membrane. It catalyses the reaction ATP + H2O + 4 H(+)(in) = ADP + phosphate + 5 H(+)(out). Its function is as follows. Produces ATP from ADP in the presence of a proton gradient across the membrane. The alpha chain is a regulatory subunit. In Streptococcus agalactiae serotype Ia (strain ATCC 27591 / A909 / CDC SS700), this protein is ATP synthase subunit alpha.